The primary structure comprises 248 residues: tRNA (guanine-N(1)-)-methyltransferase (248 aa).

S-adenosyl-L-methionine is bound by residues G113 and 133–138 (IGDYVL).

This sequence belongs to the RNA methyltransferase TrmD family. Homodimer.

The protein localises to the cytoplasm. The catalysed reaction is guanosine(37) in tRNA + S-adenosyl-L-methionine = N(1)-methylguanosine(37) in tRNA + S-adenosyl-L-homocysteine + H(+). Functionally, specifically methylates guanosine-37 in various tRNAs. This Shewanella piezotolerans (strain WP3 / JCM 13877) protein is tRNA (guanine-N(1)-)-methyltransferase.